The chain runs to 155 residues: Effector protein PevD1 (155 aa).

The signal sequence occupies residues 1-18; it reads MQFTLAAAAALFGASALA. Residues 33–148 form the AA1-like domain; sequence NMYENIDIAD…NPTTIVIDSL (116 aa). 2 disulfide bridges follow: Cys-70–Cys-84 and Cys-125–Cys-135.

Monomer. Interacts with Arabidopsis thaliana NRP.

It localises to the secreted. Its function is as follows. Effector protein. Elicits a hypersensitive response (HR) in tobacco plants (N.tabacum) and cotton (G.hirsutum). Boosts systemic acquired resistance (SAR) to tobacco mosaic virus (TMV) infection in N.tabacum and to V.dhaliae infection in primed cotton seedlings. The chain is Effector protein PevD1 from Verticillium dahliae (Verticillium wilt).